Consider the following 147-residue polypeptide: uncharacterized protein (147 aa).

A helical membrane pass occupies residues 3-23; the sequence is APMVGMVVLVVTLGAAVLALS.

To M.tuberculosis Rv1312.

It is found in the membrane. This is an uncharacterized protein from Mycobacterium leprae (strain TN).